Here is an 847-residue protein sequence, read N- to C-terminus: Glucans biosynthesis glucosyltransferase H (847 aa).

The Cytoplasmic portion of the chain corresponds to 1–138; sequence MNKTTEYIDA…KWRTVGTIRR (138 aa). Residues 139-156 form a helical membrane-spanning segment; it reads YILLILTLAQTVVATWYM. Residues 157-193 are Periplasmic-facing; sequence KTILPYQGWALINPMDMVGQDVWVSFMQLLPYMLQTG. A helical membrane pass occupies residues 194–216; sequence ILILFAVLFCWVSAGFWTALMGF. Topologically, residues 217–511 are cytoplasmic; that stretch reads LQLLIGRDKY…LVKGMHPVHR (295 aa). Residues 512-534 traverse the membrane as a helical segment; that stretch reads AVFLTGVMSYLSAPLWFMFLALS. The Periplasmic segment spans residues 535-567; sequence TALQVVHALTEPQYFLQPRQLFPVWPQWRPELA. Residues 568-590 form a helical membrane-spanning segment; sequence IALFASTMVLLFLPKLLSILLIW. The Cytoplasmic segment spans residues 591–602; it reads CKGTKEYGGFWR. Residues 603-625 form a helical membrane-spanning segment; that stretch reads VTLSLLLEVLFSVLLAPVRMLFH. The Periplasmic segment spans residues 626 to 679; it reads TVFVVSAFLGWEVVWNSPQRDDDSTSWGEAFKRHGSQLLLGLVWAVGMAWLDLR. A helical transmembrane segment spans residues 680 to 702; the sequence is FLFWLAPIVFSLILSPFVSVISS. The Cytoplasmic segment spans residues 703–847; that stretch reads RATVGLRTKR…ALRKPDAASQ (145 aa).

The protein belongs to the glycosyltransferase 2 family. OpgH subfamily.

The protein localises to the cell inner membrane. It participates in glycan metabolism; osmoregulated periplasmic glucan (OPG) biosynthesis. Involved in the biosynthesis of osmoregulated periplasmic glucans (OPGs). The protein is Glucans biosynthesis glucosyltransferase H of Escherichia coli O6:H1 (strain CFT073 / ATCC 700928 / UPEC).